The primary structure comprises 292 residues: Acetyl-coenzyme A carboxylase carboxyl transferase subunit beta (292 aa).

A CoA carboxyltransferase N-terminal domain is found at Leu-29–Val-292. 4 residues coordinate Zn(2+): Cys-33, Cys-36, Cys-52, and Cys-55. The C4-type zinc-finger motif lies at Cys-33–Cys-55.

The protein belongs to the AccD/PCCB family. In terms of assembly, acetyl-CoA carboxylase is a heterohexamer composed of biotin carboxyl carrier protein (AccB), biotin carboxylase (AccC) and two subunits each of ACCase subunit alpha (AccA) and ACCase subunit beta (AccD). Zn(2+) is required as a cofactor.

It is found in the cytoplasm. The catalysed reaction is N(6)-carboxybiotinyl-L-lysyl-[protein] + acetyl-CoA = N(6)-biotinyl-L-lysyl-[protein] + malonyl-CoA. Its pathway is lipid metabolism; malonyl-CoA biosynthesis; malonyl-CoA from acetyl-CoA: step 1/1. Functionally, component of the acetyl coenzyme A carboxylase (ACC) complex. Biotin carboxylase (BC) catalyzes the carboxylation of biotin on its carrier protein (BCCP) and then the CO(2) group is transferred by the transcarboxylase to acetyl-CoA to form malonyl-CoA. In Synechococcus sp. (strain WH7803), this protein is Acetyl-coenzyme A carboxylase carboxyl transferase subunit beta.